A 526-amino-acid chain; its full sequence is MTAFNDRLGALSDAEGRKALAGLRRGLEREALRITSCCQLALDPHPKALGSALTHSRITTDYSEALLEFITPVSGNIEDLLEGLTETHAYTLKHLDGQKLWPVSMPCYVGDVKDIPIAQYGTSNTGRMKTLYRKGLTYRYGALMQIISGVHFNFSLSSDLWPRLHALSGSSLSLDEFISESYFGLIRNYRRLVWVLPYLFGASPAICGSFLKGQKTSLEFEKTAGGTLYLPYATSLRMSDLGYTNKEQASLNISYDSLHDYLQGIREAICLPSAKFAEIGVKVDGEYRQLNANVLQIENEFYAPIRAKRVTRKGEKPSEALARAGVEYIEVRALDVNPFSPVGVEASQLRFLDVFLLYCLLSDSPKSDAVCESEITSNLRAVIHEGRKPGLALSRQGEPVTLKAWLLELFDEFDKLASLLDIDGSDYAEALAQWRMAVEDPALTLSGRVHAAVVEQGMNHGDFVMGLAAKYQDFFLSYPLSPGVEAGFQAEAASSLAAQAEIEASDEESFDEYLKGYFKGVPCALS.

It belongs to the glutamate--cysteine ligase type 1 family. Type 1 subfamily.

It catalyses the reaction L-cysteine + L-glutamate + ATP = gamma-L-glutamyl-L-cysteine + ADP + phosphate + H(+). The protein operates within sulfur metabolism; glutathione biosynthesis; glutathione from L-cysteine and L-glutamate: step 1/2. In Shewanella amazonensis (strain ATCC BAA-1098 / SB2B), this protein is Glutamate--cysteine ligase.